A 110-amino-acid chain; its full sequence is G antigen 2E (110 aa).

The segment at 1 to 110 (MSWRGRSTYY…NPEEVKTPEE (110 aa)) is disordered. Composition is skewed to acidic residues over residues 32 to 45 (FSDEVEPATPEEGE) and 87 to 96 (ECEDGPDGQE).

This sequence belongs to the GAGE family.

The sequence is that of G antigen 2E (GAGE2E) from Homo sapiens (Human).